Reading from the N-terminus, the 221-residue chain is Glutathione S-transferase (221 aa).

The GST N-terminal domain maps to 3 to 83 (GKPVLHYANT…YIAGKYNLYG (81 aa)). Residues tyrosine 9, lysine 45, 54 to 55 (QV), and 67 to 68 (QT) each bind glutathione. One can recognise a GST C-terminal domain in the interval 85–208 (DLKERALIDM…QPGSQRKPRL (124 aa)).

The protein belongs to the GST superfamily. Alpha family. In terms of assembly, homodimer or heterodimer of GSTA1 and GSTA2.

The catalysed reaction is RX + glutathione = an S-substituted glutathione + a halide anion + H(+). It carries out the reaction prostaglandin A2 + glutathione = prostaglandin A2-S-(R)-glutathione. It catalyses the reaction prostaglandin J2 + glutathione = prostaglandin J2-S-(R)-glutathione. The enzyme catalyses (13S)-hydroperoxy-(9Z,11E)-octadecadienoate + 2 glutathione = (13S)-hydroxy-(9Z,11E)-octadecadienoate + glutathione disulfide + H2O. The catalysed reaction is androst-5-ene-3,17-dione = androst-4-ene-3,17-dione. Functionally, glutathione S-transferase that catalyzes the nucleophilic attack of the sulfur atom of glutathione on the electrophilic groups of a wide range of exogenous and endogenous compounds. Involved in the formation of glutathione conjugates of both prostaglandin A2 (PGA2) and prostaglandin J2 (PGJ2). It also catalyzes the isomerization of D5-androstene-3,17-dione (AD) into D4-androstene-3,17-dione and may therefore play an important role in hormone biosynthesis. Through its glutathione-dependent peroxidase activity toward the fatty acid hydroperoxide (13S)-hydroperoxy-(9Z,11E)-octadecadienoate/13-HPODE it is also involved in the metabolism of oxidized linoleic acid. The polypeptide is Glutathione S-transferase (Gallus gallus (Chicken)).